The primary structure comprises 470 residues: UDP-glycosyltransferase 91A1 (470 aa).

UDP-alpha-D-glucose is bound by residues Ser-290, 350–352, 367–375, and 389–392; these read VEQ, HPGWGTIIE, and VYDQ.

Belongs to the UDP-glycosyltransferase family.

The sequence is that of UDP-glycosyltransferase 91A1 (UGT91A1) from Arabidopsis thaliana (Mouse-ear cress).